Reading from the N-terminus, the 178-residue chain is Large ribosomal subunit protein uL6 (178 aa).

Residues 159–178 (GKGIRYEGEHVRRKEGKTGK) form a disordered region.

Belongs to the universal ribosomal protein uL6 family. As to quaternary structure, part of the 50S ribosomal subunit.

Its function is as follows. This protein binds to the 23S rRNA, and is important in its secondary structure. It is located near the subunit interface in the base of the L7/L12 stalk, and near the tRNA binding site of the peptidyltransferase center. This chain is Large ribosomal subunit protein uL6, found in Listeria monocytogenes serotype 4b (strain CLIP80459).